Here is a 50-residue protein sequence, read N- to C-terminus: Protein HokE (50 aa).

A helical transmembrane segment spans residues 5–25 (YALVAVIVLCLTVLGFTLLVG).

The protein belongs to the Hok/Gef family.

The protein localises to the cell inner membrane. Toxic component of a type I toxin-antitoxin (TA) system. When overexpressed kills cells within minutes; causes collapse of the transmembrane potential and arrest of respiration. Its toxic effect is probably neutralized by an antisense antitoxin Sok RNA. In Escherichia coli O157:H7, this protein is Protein HokE (hokE).